The following is a 318-amino-acid chain: MSLNPDLAAYLQLVEAGRSAGKVLPMHALEADEARRQFEESSALIAGKADEPDCISDLSLTTRDGHTLPVRLYRPPQDDPALAGAALLYLHGGGYVVGSLDSHDTLCWNLAQDAGVPVIAVGYRLAPQWRFPTASDDALDAWRWLVEQAEALGIDAQRLAVVGDSVGGSLATILANQLAAQRELAAPRLQVMIYPVTDASCRRPSVQRYGSGYLLEAQTLEWFYQQYATVPADRLDPRFSPLLGSVASNSAPALMLIAECDPLHDQGVAYARHLEQAGVAVQLAVIPGVTHDFMRMGSIIEEADEGLVMVVEALQQHL.

Active-site residues include serine 165, aspartate 261, and histidine 291.

The protein belongs to the 'GDXG' lipolytic enzyme family. Monomer.

It is found in the cytoplasm. It carries out the reaction ethyl acetate + H2O = ethanol + acetate + H(+). With respect to regulation, inhibited by the serine protease inhibitor phenylmethylsulfonyl fluoride, the histidine reagent diethylpyrocarbonate and two sulfhydryl reagents, mercuric chloride and naphthol AS-D chloroacetate. Not inhibited by EDTA. Its function is as follows. Esterase that catalyzes the hydrolysis of ethyl acetate. Can also use propyl acetate and the chromogenic substrates alpha-naphthyl acetate, alpha-naphthyl propionate, alpha-naphthyl caproate and 4-nitrophenyl acetate, with a preference for short-chain aliphatic esters. Highest activity is obtained in vitro with propyl acetate, followed by ethyl acetate. In vivo, could be involved in pyoverdine biosynthesis, but its specific role and its in vivo substrate have not been identified. The chain is Ethyl acetate hydrolase from Pseudomonas putida (Arthrobacter siderocapsulatus).